The sequence spans 360 residues: Phospho-N-acetylmuramoyl-pentapeptide-transferase (360 aa).

The next 10 helical transmembrane spans lie at Ile-27 to Trp-47, Pro-72 to Tyr-92, Ser-94 to Ile-114, Trp-132 to Gly-152, Ile-168 to Ser-188, Gly-199 to Thr-219, Phe-235 to Trp-255, Val-263 to Leu-283, Phe-288 to Val-308, and Val-338 to Lys-358.

This sequence belongs to the glycosyltransferase 4 family. MraY subfamily. Mg(2+) serves as cofactor.

The protein resides in the cell inner membrane. It catalyses the reaction UDP-N-acetyl-alpha-D-muramoyl-L-alanyl-gamma-D-glutamyl-meso-2,6-diaminopimeloyl-D-alanyl-D-alanine + di-trans,octa-cis-undecaprenyl phosphate = di-trans,octa-cis-undecaprenyl diphospho-N-acetyl-alpha-D-muramoyl-L-alanyl-D-glutamyl-meso-2,6-diaminopimeloyl-D-alanyl-D-alanine + UMP. The protein operates within cell wall biogenesis; peptidoglycan biosynthesis. In terms of biological role, catalyzes the initial step of the lipid cycle reactions in the biosynthesis of the cell wall peptidoglycan: transfers peptidoglycan precursor phospho-MurNAc-pentapeptide from UDP-MurNAc-pentapeptide onto the lipid carrier undecaprenyl phosphate, yielding undecaprenyl-pyrophosphoryl-MurNAc-pentapeptide, known as lipid I. The protein is Phospho-N-acetylmuramoyl-pentapeptide-transferase of Sodalis glossinidius (strain morsitans).